We begin with the raw amino-acid sequence, 457 residues long: Exodeoxyribonuclease 7 large subunit (457 aa).

This sequence belongs to the XseA family. In terms of assembly, heterooligomer composed of large and small subunits.

It localises to the cytoplasm. It carries out the reaction Exonucleolytic cleavage in either 5'- to 3'- or 3'- to 5'-direction to yield nucleoside 5'-phosphates.. Bidirectionally degrades single-stranded DNA into large acid-insoluble oligonucleotides, which are then degraded further into small acid-soluble oligonucleotides. This chain is Exodeoxyribonuclease 7 large subunit, found in Cronobacter sakazakii (strain ATCC BAA-894) (Enterobacter sakazakii).